Consider the following 478-residue polypeptide: Proline--tRNA ligase (478 aa).

This sequence belongs to the class-II aminoacyl-tRNA synthetase family. ProS type 3 subfamily. Homodimer.

It is found in the cytoplasm. The catalysed reaction is tRNA(Pro) + L-proline + ATP = L-prolyl-tRNA(Pro) + AMP + diphosphate. Functionally, catalyzes the attachment of proline to tRNA(Pro) in a two-step reaction: proline is first activated by ATP to form Pro-AMP and then transferred to the acceptor end of tRNA(Pro). In Ignicoccus hospitalis (strain KIN4/I / DSM 18386 / JCM 14125), this protein is Proline--tRNA ligase.